The primary structure comprises 147 residues: Peptide methionine sulfoxide reductase MsrB (147 aa).

One can recognise a MsrB domain in the interval 8–131 (KEELKKILTE…NSASLKFIPK (124 aa)). The active-site Nucleophile is the cysteine 120.

It belongs to the MsrB Met sulfoxide reductase family.

It carries out the reaction L-methionyl-[protein] + [thioredoxin]-disulfide + H2O = L-methionyl-(R)-S-oxide-[protein] + [thioredoxin]-dithiol. This is Peptide methionine sulfoxide reductase MsrB from Clostridium perfringens (strain SM101 / Type A).